Here is a 487-residue protein sequence, read N- to C-terminus: Cyclic AMP-dependent transcription factor ATF-2 (487 aa).

Residues 7 to 31 (FLCTAPGCGQRFTNEDHLAVHKHKH) form a C2H2-type zinc finger. Position 34 is a phosphothreonine; by PKC/PRKCH (threonine 34). Serine 44 bears the Phosphoserine mark. Threonine 51 bears the Phosphothreonine; by MAPK11 and MAPK14 mark. Residue threonine 53 is modified to Phosphothreonine; by MAPK1, MAPK3, MAPK11, MAPK12, MAPK14 and PLK3. Threonine 55 bears the Phosphothreonine; by VRK1 mark. A phosphoserine mark is found at serine 72 and serine 94. The residue at position 98 (threonine 98) is a Phosphothreonine. Serine 103 carries the phosphoserine; by PKC/PRKCA and PKC/PRKCB modification. Disordered stretches follow at residues 106 to 137 (EEPS…PLAQ) and 241 to 355 (PGIP…RQKR). Serine 118 is modified (phosphoserine). A compositionally biased stretch (polar residues) spans 264-275 (LTQQHPPVTNGD). Residues 278–281 (KGHG) form an essential for its histone acetyltransferase activity region. Positions 300–316 (PATSTTETPASPAHTTP) are enriched in low complexity. At serine 310 the chain carries Phosphoserine. Position 322 is a phosphoserine; by PKC/PRKCA and PKC/PRKCB (serine 322). A compositionally biased stretch (basic and acidic residues) spans 328 to 345 (AANEDPDEKRRKFLERNR). In terms of domain architecture, bZIP spans 334–397 (DEKRRKFLER…AQLKQLLLAH (64 aa)). The segment at 336–356 (KRRKFLERNRAAASRCRQKRK) is basic motif. Lysine 339 carries the post-translational modification N6-acetyllysine. Serine 349 is modified (phosphoserine; by PKC/PRKCA and PKC/PRKCB). Lysine 356 carries the N6-acetyllysine modification. The leucine-zipper stretch occupies residues 362–390 (LEKKAEDLSSLNGQLQSEVTLLRNEVAQL). Positions 387–396 (VAQLKQLLLA) match the Nuclear export signal motif. The interval 407–453 (KKSGYHTADKDDSSEDLSVPSSPHTEAIQHSSVSTSNGVSSTSKAEA) is disordered. 2 positions are modified to phosphoserine: serine 424 and serine 428. Positions 425 to 436 (VPSSPHTEAIQH) are enriched in polar residues. Over residues 437–449 (SSVSTSNGVSSTS) the composition is skewed to low complexity. A phosphoserine; by ATM mark is found at serine 472 and serine 480.

Belongs to the bZIP family. ATF subfamily. Binds DNA as a dimer and can form a homodimer in the absence of DNA. Can form a heterodimer with JUN. Heterodimerization is essential for its transcriptional activity. Interacts with SMAD3 and SMAD4. Interacts with the HK1/VDAC1 complex. Interacts with NBN, MRE11, XPO1, KAT5 and CUL3. Binds through its N-terminal region to UTF1 which acts as a coactivator of ATF2 transcriptional activity. Phosphorylation of Thr-51 by MAPK14 and MAPK11, and at Thr-53 by MAPK1/ERK2, MAPK3/ERK1, MAPK11, MAPK12 and MAPK14 in response to external stimulus like insulin causes increased transcriptional activity. Phosphorylated by PLK3 following hyperosmotic stress. Also phosphorylated and activated by JNK and CaMK4. ATM-mediated phosphorylation at Ser-472 and Ser-480 stimulates its function in DNA damage response. Phosphorylation at Ser-44, Thr-55 and Ser-103 activates its transcriptional activity. Phosphorylation at Thr-51 or Thr-53 enhances acetylation of histones H2B and H4.

Its subcellular location is the nucleus. The protein localises to the cytoplasm. It localises to the mitochondrion outer membrane. In terms of biological role, transcriptional activator which regulates the transcription of various genes, including those involved in anti-apoptosis, cell growth, and DNA damage response. Dependent on its binding partner, binds to CRE (cAMP response element) consensus sequences (5'-TGACGTCA-3') or to AP-1 (activator protein 1) consensus sequences (5'-TGACTCA-3'). In the nucleus, contributes to global transcription and the DNA damage response, in addition to specific transcriptional activities that are related to cell development, proliferation and death. In the cytoplasm, interacts with and perturbs HK1- and VDAC1-containing complexes at the mitochondrial outer membrane, thereby impairing mitochondrial membrane potential, inducing mitochondrial leakage and promoting cell death. The phosphorylated form (mediated by ATM) plays a role in the DNA damage response and is involved in the ionizing radiation (IR)-induced S phase checkpoint control and in the recruitment of the MRN complex into the IR-induced foci (IRIF). Exhibits histone acetyltransferase (HAT) activity which specifically acetylates histones H2B and H4 in vitro. In concert with CUL3 and RBX1, promotes the degradation of KAT5 thereby attenuating its ability to acetylate and activate ATM. Can elicit oncogenic or tumor suppressor activities depending on the tissue or cell type. The sequence is that of Cyclic AMP-dependent transcription factor ATF-2 (Atf2) from Mus musculus (Mouse).